Here is a 545-residue protein sequence, read N- to C-terminus: E3 ubiquitin-protein ligase ipaH9.8 (545 aa).

The interaction with target proteins stretch occupies residues 1-242 (MLPINNNFSL…YHGPRIYFSM (242 aa)). LRR repeat units follow at residues 57–77 (NSDELRLDRLNLSSLPDNLPA), 78–99 (QITLLNVSYNQLTNLPELPVTL), 100–117 (KKLYSASNKLSELPVLPP), 118–139 (ALESLQVQHNELENLPALPDSL), 140–157 (LTMNISYNEIVSLPSLPQ), 158–179 (ALKNLRATRNFLTELPAFSEGN), 182–203 (VVREYFFDRNQISHIPESILNL), and 205–228 (NECSIHISDNPLSSHALPALQRLT). Positions 243–250 (SDGQQNTL) are linker. An E3 ubiquitin-protein ligase catalytic domain region spans residues 251–545 (HRPLADAVTA…PENGSQLHHS (295 aa)). The NEL domain maps to 253 to 545 (PLADAVTAWF…PENGSQLHHS (293 aa)). The active-site Glycyl thioester intermediate is Cys-337.

Belongs to the LRR-containing bacterial E3 ligase family. In terms of assembly, also interacts with human and mouse U2AF1 (U2AF35). In terms of processing, autoubiquitinated (in vitro). Ubiquitinated in the presence of host E1 ubiquitin-activating enzyme, E2 ubiquitin-conjugating enzyme and ubiquitin.

It localises to the secreted. Its subcellular location is the host cytoplasm. The protein resides in the host nucleus. It catalyses the reaction S-ubiquitinyl-[E2 ubiquitin-conjugating enzyme]-L-cysteine + [acceptor protein]-L-lysine = [E2 ubiquitin-conjugating enzyme]-L-cysteine + N(6)-ubiquitinyl-[acceptor protein]-L-lysine.. It functions in the pathway protein modification; protein ubiquitination. With respect to regulation, exists in an autoinhibited state in the absence of substrate protein, due to interactions of the leucine-rich repeats with NEL domain. Is activated upon binding to a substrate protein. Functionally, effector E3 ubiquitin ligase that interferes with host's ubiquitination pathway and modulates the acute inflammatory responses, thus facilitating bacterial colonization within the host cell. Interacts with IKBKG (NEMO) and TNIP1 (ABIN-1), a ubiquitin-binding adapter protein, which results in TNIP1-dependent 'Lys-27'-linked polyubiquitination of IKBKG. Consequently, polyubiquitinated IKBKG undergoes proteasome-dependent degradation, which perturbs NF-kappa-B activation during bacterial infection. Mediates polyubiquitination of host U2AF1, leading to its proteasomal degradation. Catalyzes 'Lys-48'-linked polyubiquitination and subsequent degradation of a subset of host guanylate-binding proteins (GBP1, GBP2, GBP4 and GBP6), thereby suppressing host cell defense. In contrast, host GBP3 and GBP7 are not ubiquitinated by IpaH9.8. Uses UBE2D2 (UBCH5B) as an E2 ubiquitin-conjugating enzyme. The polypeptide is E3 ubiquitin-protein ligase ipaH9.8 (Shigella flexneri).